A 62-amino-acid polypeptide reads, in one-letter code: Beta-defensin 10 (62 aa).

Positions 1-22 are cleaved as a signal peptide; the sequence is MRLHHLLLLLLLVVLSSGSGFT. Gln23 is modified (pyrrolidone carboxylic acid). Cystine bridges form between Cys31/Cys60, Cys38/Cys53, and Cys43/Cys61.

Belongs to the beta-defensin family. Neutrophilic granules.

The protein resides in the secreted. Its function is as follows. Has bactericidal activity. Active against E.coli ML35 and S.aureus 502A. This chain is Beta-defensin 10 (DEFB10), found in Bos taurus (Bovine).